Here is a 312-residue protein sequence, read N- to C-terminus: Olfactory receptor 51B5 (312 aa).

Topologically, residues 1–23 (MSSSGSSHPFLLTGFPGLEEAHH) are extracellular. A helical membrane pass occupies residues 24–44 (WISVFFLFMYISILFGNGTLL). Residues 45 to 52 (LLIKEDHN) are Cytoplasmic-facing. The helical transmembrane segment at 53-73 (LHEPMYFFLAMLAATDLGLAL) threads the bilayer. The Extracellular portion of the chain corresponds to 74-97 (TTMPTVLGVLWLDHREIGSAACFS). C95 and C187 are oxidised to a cystine. Residues 98–118 (QAYFIHSLSFLESGILLAMAY) traverse the membrane as a helical segment. The Cytoplasmic segment spans residues 119–137 (DRFIAICNPLRYTSVLTNT). A helical transmembrane segment spans residues 138 to 158 (RVVKIGLGVLMRGFVSVVPPI). The Extracellular portion of the chain corresponds to 159 to 194 (RPLYFFLYCHSHVLSHAFCLHQDVIKLACADTTFNR). A helical transmembrane segment spans residues 195 to 215 (LYPAVLVVFIFVLDYLIIFIS). At 216–235 (YVLILKTVLSIASREERAKA) the chain is on the cytoplasmic side. Residues 236 to 256 (LITCVSHICCVLVFYVTVIGL) traverse the membrane as a helical segment. The Extracellular portion of the chain corresponds to 257 to 271 (SLIHRFGKQVPHIVH). A helical transmembrane segment spans residues 272 to 292 (LIMSYAYFLFPPLMNPITYSV). Residues 293-312 (KTKQIQNAILHLFTTHRIGT) are Cytoplasmic-facing.

This sequence belongs to the G-protein coupled receptor 1 family.

The protein resides in the cell membrane. Odorant receptor. This Homo sapiens (Human) protein is Olfactory receptor 51B5 (OR51B5).